Reading from the N-terminus, the 41-residue chain is MAGIVSAFVTFFYRFISFTTSYVQCVRSIIAEHAGPHGWFL.

This is an uncharacterized protein from Treponema pallidum (strain Nichols).